A 349-amino-acid chain; its full sequence is Glycerol-3-phosphate dehydrogenase [NAD(+)], cytoplasmic (349 aa).

An NAD(+)-binding site is contributed by 10-15 (GSGNWG). Residue lysine 120 participates in substrate binding. Alanine 153 lines the NAD(+) pocket. Serine 154 carries the post-translational modification Phosphoserine. The active-site Proton acceptor is the lysine 204. Arginine 269 lines the NAD(+) pocket. 269 to 270 (RN) is a binding site for substrate. An N6-succinyllysine modification is found at lysine 289. Lysine 296 and glutamine 298 together coordinate NAD(+). A Phosphotyrosine modification is found at tyrosine 326.

This sequence belongs to the NAD-dependent glycerol-3-phosphate dehydrogenase family. In terms of assembly, homodimer.

It localises to the cytoplasm. The enzyme catalyses sn-glycerol 3-phosphate + NAD(+) = dihydroxyacetone phosphate + NADH + H(+). Its function is as follows. Has glycerol-3-phosphate dehydrogenase activity. This Mus musculus (Mouse) protein is Glycerol-3-phosphate dehydrogenase [NAD(+)], cytoplasmic.